The primary structure comprises 321 residues: Methenyltetrahydromethanopterin cyclohydrolase (321 aa).

It belongs to the MCH family.

Its subcellular location is the cytoplasm. The catalysed reaction is 5,10-methenyl-5,6,7,8-tetrahydromethanopterin + H2O = N(5)-formyl-5,6,7,8-tetrahydromethanopterin + H(+). It participates in one-carbon metabolism; methanogenesis from CO(2); 5,10-methenyl-5,6,7,8-tetrahydromethanopterin from CO(2): step 3/3. Catalyzes the reversible interconversion of 5-formyl-H(4)MPT to methenyl-H(4)MPT(+). This is Methenyltetrahydromethanopterin cyclohydrolase (mch) from Methanosarcina barkeri (strain Fusaro / DSM 804).